The following is a 76-amino-acid chain: Gallerimycin (76 aa).

The N-terminal stretch at 1–19 (MKIAFIVAISLAFLAVTSC) is a signal peptide.

This sequence belongs to the invertebrate defensin family.

Its function is as follows. Has antifungal activity against the entomopathogenic fungus M.nisopliae, but does not display any antifungal activity against S.cerevisiae nor any antimicrobial activity against M.luteus, B.subtilis, and E.coli. This chain is Gallerimycin (LOC113523440), found in Galleria mellonella (Greater wax moth).